The chain runs to 161 residues: Ribosome maturation factor RimP (161 aa).

The protein belongs to the RimP family.

It localises to the cytoplasm. Its function is as follows. Required for maturation of 30S ribosomal subunits. This chain is Ribosome maturation factor RimP, found in Herminiimonas arsenicoxydans.